The following is a 547-amino-acid chain: MPILSLHNMHDKVLILDFGSQVTQLIARRVREAHVYCEIHPNDVSDAFVREFAPKAIILSGSHASTYEDQDLRAPQAVWDLGVPVLGICYGMFAMTVQQGGKVEASAHREFGYAEVRAHGHTRLLDSIEDFRTPEGHGMLKVWMSHGDKVTEMPPGFKLMASTPSCPIAGMADEARGYYAVQFHPEVTHTVQGRALLERFVLEIAGAKPDWIMRDHIEEAVKSIREQVGDEEVILGLSGGVDSSVAAALIHRAIGDQLTCVFVDHGLLRLNEGQMVLDMFEGRLHAKVVHVDASEQFLGHLTGVTDPEAKRKIIGREFVEVFQAEAKTLTNAKWLAQGTIYPDVIESGGAKTKKATTIKSHHNVGGLPETLGLKLLEPLRDLFKDEVRELGVALGLPPEMVYRHPFPGPGLGVRILGEVKREYADLLRRADAIFIEELRGTKATAQDAVAGLCTEDQVGKSWYDLTSQAFAVFLPVKSVGVMGDGRTYDYVVALRAVQTTDFMTAHWAHLPYALLGRVSNRIINEVRGINRVVYDVSGKPPATIEWE.

In terms of domain architecture, Glutamine amidotransferase type-1 spans 12 to 210 (KVLILDFGSQ…VLEIAGAKPD (199 aa)). The active-site Nucleophile is the cysteine 89. Residues histidine 184 and glutamate 186 contribute to the active site. The GMPS ATP-PPase domain occupies 211 to 403 (WIMRDHIEEA…LGLPPEMVYR (193 aa)). An ATP-binding site is contributed by 238–244 (SGGVDSS).

In terms of assembly, homodimer.

The enzyme catalyses XMP + L-glutamine + ATP + H2O = GMP + L-glutamate + AMP + diphosphate + 2 H(+). The protein operates within purine metabolism; GMP biosynthesis; GMP from XMP (L-Gln route): step 1/1. In terms of biological role, catalyzes the synthesis of GMP from XMP. The sequence is that of GMP synthase [glutamine-hydrolyzing] from Ralstonia nicotianae (strain ATCC BAA-1114 / GMI1000) (Ralstonia solanacearum).